The chain runs to 153 residues: Neuromedin-S (153 aa).

The signal sequence occupies residues 1–26 (MKHLRPQFPLILAIYCFCMLQIPSSG). 3 propeptides span residues 27–69 (FPQP…IYKR), 70–105 (FLFHYSRTQEATHPVKTGFPPVHPLMHLAAKLANRR), and 106–108 (MKR). Asparagine 141 is subject to Asparagine amide. The propeptide occupies 144 to 153 (NIEDEAQIQW).

This sequence belongs to the NmU family.

Its subcellular location is the secreted. In terms of biological role, implicated in the regulation of circadian rhythms through autocrine and/or paracrine actions. This Homo sapiens (Human) protein is Neuromedin-S (NMS).